The chain runs to 1715 residues: Pentafunctional AROM polypeptide (1715 aa).

The span at 1-17 shows a compositional bias: polar residues; it reads MTSTASAQQPVLRTKTP. The tract at residues 1–26 is disordered; the sequence is MTSTASAQQPVLRTKTPSYHAPPSTD. Positions 1–421 are 3-dehydroquinate synthase; sequence MTSTASAQQP…VQNMASTVSD (421 aa). Residues 71–73, 112–115, 143–145, and aspartate 148 contribute to the NAD(+) site; these read DQN, EASK, and GGV. Arginine 159 provides a ligand contact to 7-phospho-2-dehydro-3-deoxy-D-arabino-heptonate. 168–169 provides a ligand contact to NAD(+); it reads TT. 7-phospho-2-dehydro-3-deoxy-D-arabino-heptonate is bound by residues aspartate 175 and lysine 181. Residue lysine 190 participates in NAD(+) binding. Asparagine 191 provides a ligand contact to 7-phospho-2-dehydro-3-deoxy-D-arabino-heptonate. Residues 208-211 and asparagine 219 each bind NAD(+); that span reads WLKT. A Zn(2+)-binding site is contributed by glutamate 223. Residues 223–226 and lysine 287 each bind 7-phospho-2-dehydro-3-deoxy-D-arabino-heptonate; that span reads EVVK. The active-site Proton acceptor; for 3-dehydroquinate synthase activity is the glutamate 297. Residues 301–305 and histidine 308 each bind 7-phospho-2-dehydro-3-deoxy-D-arabino-heptonate; that span reads RNLVN. A Zn(2+)-binding site is contributed by histidine 308. Histidine 312 functions as the Proton acceptor; for 3-dehydroquinate synthase activity in the catalytic mechanism. Residues histidine 324 and lysine 393 each contribute to the 7-phospho-2-dehydro-3-deoxy-D-arabino-heptonate site. Histidine 324 lines the Zn(2+) pocket. The segment at 434–895 is EPSP synthase; the sequence is VTPIHEQPNK…WDDLERKLGI (462 aa). The active-site For EPSP synthase activity is cysteine 877. Positions 948-1165 are shikimate kinase; it reads HATIICIGMR…KGGRRTYFLS (218 aa). 955-962 contributes to the ATP binding site; it reads GMRASGKT. A 3-dehydroquinase region spans residues 1166–1389; the sequence is LTFPDVVPKL…AAPGQLSFRQ (224 aa). The active-site Proton acceptor; for 3-dehydroquinate dehydratase activity is the histidine 1292. Lysine 1320 serves as the catalytic Schiff-base intermediate with substrate; for 3-dehydroquinate dehydratase activity. The interval 1402 to 1715 is shikimate dehydrogenase; it reads ARRFALFGSP…AAWDVYLQRC (314 aa).

The protein in the N-terminal section; belongs to the sugar phosphate cyclases superfamily. Dehydroquinate synthase family. This sequence in the 2nd section; belongs to the EPSP synthase family. It in the 3rd section; belongs to the shikimate kinase family. In the 4th section; belongs to the type-I 3-dehydroquinase family. The protein in the C-terminal section; belongs to the shikimate dehydrogenase family. As to quaternary structure, homodimer. Zn(2+) serves as cofactor.

Its subcellular location is the cytoplasm. It catalyses the reaction 7-phospho-2-dehydro-3-deoxy-D-arabino-heptonate = 3-dehydroquinate + phosphate. It carries out the reaction 3-dehydroquinate = 3-dehydroshikimate + H2O. The enzyme catalyses shikimate + NADP(+) = 3-dehydroshikimate + NADPH + H(+). The catalysed reaction is shikimate + ATP = 3-phosphoshikimate + ADP + H(+). It catalyses the reaction 3-phosphoshikimate + phosphoenolpyruvate = 5-O-(1-carboxyvinyl)-3-phosphoshikimate + phosphate. The protein operates within metabolic intermediate biosynthesis; chorismate biosynthesis; chorismate from D-erythrose 4-phosphate and phosphoenolpyruvate: step 2/7. Its pathway is metabolic intermediate biosynthesis; chorismate biosynthesis; chorismate from D-erythrose 4-phosphate and phosphoenolpyruvate: step 3/7. It participates in metabolic intermediate biosynthesis; chorismate biosynthesis; chorismate from D-erythrose 4-phosphate and phosphoenolpyruvate: step 4/7. It functions in the pathway metabolic intermediate biosynthesis; chorismate biosynthesis; chorismate from D-erythrose 4-phosphate and phosphoenolpyruvate: step 5/7. The protein operates within metabolic intermediate biosynthesis; chorismate biosynthesis; chorismate from D-erythrose 4-phosphate and phosphoenolpyruvate: step 6/7. Functionally, the AROM polypeptide catalyzes 5 consecutive enzymatic reactions in prechorismate polyaromatic amino acid biosynthesis. The polypeptide is Pentafunctional AROM polypeptide (Mycosarcoma maydis (Corn smut fungus)).